Consider the following 387-residue polypeptide: Alpha-sarcoglycan (387 aa).

The first 24 residues, 1–24 (MAAAALLWLPLLVGCLAGPGGTEA), serve as a signal peptide directing secretion. Residues 25 to 290 (QQTTLYPLVG…ATARDFLADA (266 aa)) lie on the Extracellular side of the membrane. 2 N-linked (GlcNAc...) asparagine glycosylation sites follow: Asn174 and Asn246. The chain crosses the membrane as a helical span at residues 291–311 (LVTLLVPLLVALLLALLLAYI). Residues 312–387 (MCCRREGRLK…AQVPLILDQH (76 aa)) are Cytoplasmic-facing. Ser377 bears the Phosphoserine mark.

The protein belongs to the sarcoglycan alpha/epsilon family. As to quaternary structure, cross-link to form 2 major subcomplexes: one consisting of SGCB, SGCD and SGCG and the other consisting of SGCB and SGCD. The association between SGCB and SGCG is particularly strong while SGCA is loosely associated with the other sarcoglycans. Interacts with the syntrophin SNTA1.

Its subcellular location is the cell membrane. The protein localises to the sarcolemma. It localises to the cytoplasm. The protein resides in the cytoskeleton. Functionally, component of the sarcoglycan complex, a subcomplex of the dystrophin-glycoprotein complex which forms a link between the F-actin cytoskeleton and the extracellular matrix. This is Alpha-sarcoglycan (SGCA) from Oryctolagus cuniculus (Rabbit).